A 335-amino-acid chain; its full sequence is Ferrochelatase (335 aa).

2 residues coordinate Fe cation: His192 and Glu291.

The protein belongs to the ferrochelatase family.

The protein resides in the cytoplasm. It carries out the reaction heme b + 2 H(+) = protoporphyrin IX + Fe(2+). It participates in porphyrin-containing compound metabolism; protoheme biosynthesis; protoheme from protoporphyrin-IX: step 1/1. In terms of biological role, catalyzes the ferrous insertion into protoporphyrin IX. The protein is Ferrochelatase of Bdellovibrio bacteriovorus (strain ATCC 15356 / DSM 50701 / NCIMB 9529 / HD100).